The sequence spans 238 residues: Protein Iojap, chloroplastic (238 aa).

A chloroplast-targeting transit peptide spans 1–66; it reads MASSTGLTVA…KILTSLSNSR (66 aa).

The protein belongs to the Iojap/RsfS family. Interacts with chloroplast ribosomal protein uL14c (rpl14).

The protein resides in the plastid. It localises to the chloroplast. In terms of biological role, may be a ribosome silencing factor (Potential). Involved in plastid biogenesis. In Arabidopsis thaliana (Mouse-ear cress), this protein is Protein Iojap, chloroplastic (IJ).